Consider the following 135-residue polypeptide: Transcription antitermination protein NusB (135 aa).

This sequence belongs to the NusB family.

Functionally, involved in transcription antitermination. Required for transcription of ribosomal RNA (rRNA) genes. Binds specifically to the boxA antiterminator sequence of the ribosomal RNA (rrn) operons. This chain is Transcription antitermination protein NusB, found in Shewanella piezotolerans (strain WP3 / JCM 13877).